Consider the following 272-residue polypeptide: GEM-like protein 5 (272 aa).

The disordered stretch occupies residues 1-42 (MTGSQEDQPKIIIDQEQPKTLETEHQPEPSSSSPDQKKWGTH). Residues 16–27 (EQPKTLETEHQP) show a composition bias toward basic and acidic residues. In terms of domain architecture, GRAM spans 143–221 (SLFRQIFGTE…ANVATVNPVV (79 aa)).

The protein belongs to the GEM family.

The sequence is that of GEM-like protein 5 from Arabidopsis thaliana (Mouse-ear cress).